The following is a 544-amino-acid chain: Chaperonin GroEL (544 aa).

ATP contacts are provided by residues 30–33 (TLGP), Lys-51, 87–91 (DGTTT), Gly-415, 479–481 (NAA), and Asp-495.

Belongs to the chaperonin (HSP60) family. As to quaternary structure, forms a cylinder of 14 subunits composed of two heptameric rings stacked back-to-back. Interacts with the co-chaperonin GroES.

It localises to the cytoplasm. It catalyses the reaction ATP + H2O + a folded polypeptide = ADP + phosphate + an unfolded polypeptide.. Functionally, together with its co-chaperonin GroES, plays an essential role in assisting protein folding. The GroEL-GroES system forms a nano-cage that allows encapsulation of the non-native substrate proteins and provides a physical environment optimized to promote and accelerate protein folding. The protein is Chaperonin GroEL of Francisella tularensis subsp. mediasiatica (strain FSC147).